The sequence spans 313 residues: Nodulation protein D 3 (313 aa).

The region spanning 6–63 (LDLNLLVALDALMTKRSVTAAARSINLSQPAMSSAIARLRSYFQDELFRMQGRELITT) is the HTH lysR-type domain. A DNA-binding region (H-T-H motif) is located at residues 23–42 (VTAAARSINLSQPAMSSAIA).

Belongs to the LysR transcriptional regulatory family.

Functionally, nodD regulates the expression of the nodABCFE genes which encode other nodulation proteins. NodD is also a negative regulator of its own expression. Binds flavonoids as inducers. The chain is Nodulation protein D 3 (nodD3) from Rhizobium meliloti (strain 1021) (Ensifer meliloti).